We begin with the raw amino-acid sequence, 209 residues long: Large ribosomal subunit protein uL3 (209 aa).

The segment at 124 to 156 (KRHNFSGGQRTHGQSDRQRAPGSVGGSSDPSRV) is disordered.

This sequence belongs to the universal ribosomal protein uL3 family. As to quaternary structure, part of the 50S ribosomal subunit. Forms a cluster with proteins L14 and L19.

Its function is as follows. One of the primary rRNA binding proteins, it binds directly near the 3'-end of the 23S rRNA, where it nucleates assembly of the 50S subunit. The polypeptide is Large ribosomal subunit protein uL3 (Pelodictyon phaeoclathratiforme (strain DSM 5477 / BU-1)).